A 285-amino-acid polypeptide reads, in one-letter code: Probable endonuclease 4 (285 aa).

Residues His69, His109, Glu145, Asp179, His182, His216, Asp229, His231, and Glu261 each contribute to the Zn(2+) site.

It belongs to the AP endonuclease 2 family. Zn(2+) serves as cofactor.

The catalysed reaction is Endonucleolytic cleavage to 5'-phosphooligonucleotide end-products.. Its function is as follows. Endonuclease IV plays a role in DNA repair. It cleaves phosphodiester bonds at apurinic or apyrimidinic (AP) sites, generating a 3'-hydroxyl group and a 5'-terminal sugar phosphate. The protein is Probable endonuclease 4 of Enterobacter sp. (strain 638).